The primary structure comprises 523 residues: Effector protein hopAB1 (523 aa).

3 disordered regions span residues Met1–Gln94, Val165–Asp223, and Arg299–Arg320. Basic and acidic residues predominate over residues Thr18–Ser31. The segment covering Ser181–Ser194 has biased composition (low complexity).

It belongs to the HopAB family.

The protein resides in the secreted. Effector protein that plays different roles depending on the species and plant cultivars that interact with the pathogen. Acts as a virulence determinant by enhancing the development of disease symptoms and bacterial growth. Acts as an avirulence factor by eliciting hypersensitive response (HR) and plant resistance. The protein is Effector protein hopAB1 (hopAB1) of Pseudomonas savastanoi pv. glycinea (Pseudomonas syringae pv. glycinea).